The sequence spans 241 residues: Probable transcriptional regulatory protein FMG_0893 (241 aa).

This sequence belongs to the TACO1 family.

The protein localises to the cytoplasm. The chain is Probable transcriptional regulatory protein FMG_0893 from Finegoldia magna (strain ATCC 29328 / DSM 20472 / WAL 2508) (Peptostreptococcus magnus).